The sequence spans 569 residues: Ribosome-inactivating protein SNAI' (569 aa).

Residues 1–28 (MKVVATILYLVVLAICGLGIHGAHPTHS) form the signal peptide. N-linked (GlcNAc...) asparagine glycosylation occurs at asparagine 40. Glutamate 201 is a catalytic residue. Cystine bridges form between cysteine 286/cysteine 311, cysteine 328/cysteine 347, and cysteine 369/cysteine 381. Ricin B-type lectin domains are found at residues 315–435 (EEVT…WIVG) and 437–565 (VEPL…WIAS). One copy of the 1-alpha repeat lies at 325-365 (DGFCAEVKNGDEKDGTPVQLSSCGEQSNQQWTFSTDGTIQS). The stretch at 366-401 (LGKCLTTSSSVMIYNCKVVPPESTKWVVSIDGTITN) is one 1-beta repeat. Residues 404–436 (SGLVLTAPKAAEGTLVSLEKNVHAARQGWIVGN) form a 1-gamma repeat. A 2-alpha repeat occupies 448 to 488 (EQMCLETNPGNNDVSLGDCSVKSASKVDQKWALYGDGTIRV). Disulfide bonds link cysteine 451/cysteine 466 and cysteine 495/cysteine 512. A 2-beta repeat occupies 492–530 (RSLCVTSEGKSSNEPIIILKCLGWANQRWVFNTDGTISN). The 2-gamma repeat unit spans residues 533-566 (SKLVMHVDQNDVPLRKIILSHPSGTSNQQWIAST).

In the N-terminal section; belongs to the ribosome-inactivating protein family. Type 2 RIP subfamily. In terms of assembly, disulfide-linked dimer of A and B chains.

It catalyses the reaction Endohydrolysis of the N-glycosidic bond at one specific adenosine on the 28S rRNA.. In terms of biological role, the A chain is responsible for inhibiting protein synthesis through the catalytic inactivation of 60S ribosomal subunits by removing adenine from position 4,324 of 28S rRNA. The B chain binds to cell receptors and probably facilitates the entry into the cell of the A chain; B chains are also responsible for cell agglutination (lectin activity). Agglutination is inhibited by Neu5Ac(alpha2,6)lactose, and N-linked glycoproteins such as fetuin and orosomucoid. In Sambucus nigra (European elder), this protein is Ribosome-inactivating protein SNAI'.